A 1364-amino-acid chain; its full sequence is ABC-type transporter cns4 (1364 aa).

The ABC transporter 1 domain maps to 42–290 (SRVKESRAKP…MEEMGFLYTD (249 aa)). N-linked (GlcNAc...) asparagine glycans are attached at residues N152 and N214. Transmembrane regions (helical) follow at residues 435–455 (LFFA…GSFA), 483–503 (IPLI…MTGL), 508–528 (EAFL…TALF), 540–560 (AAIK…GFLI), and 567–587 (PWLG…AVLS). The N-linked (GlcNAc...) asparagine glycan is linked to N610. Residues 650-670 (FAIVWVWWALFVILTVYFTSN) traverse the membrane as a helical segment. N-linked (GlcNAc...) asparagine glycosylation is found at N689, N711, and N739. Positions 697–732 (DEEVGSGPDSHDSRNRSGISPIGDKQETSTDGPSKI) are disordered. The ABC transporter 2 domain occupies 737-985 (IRNTSVFTWK…TVNEYFGRNG (249 aa)). 779–786 (GSSGAGKT) is a binding site for ATP. 6 consecutive transmembrane segments (helical) span residues 1076–1094 (LMLH…WKIG), 1105–1125 (FTIF…QPLF), 1146–1166 (AFAT…AVVY), 1185–1205 (AVFF…QAIA), 1211–1231 (AIFA…FCGV), and 1245–1265 (WLYY…FTTF).

Belongs to the ABC transporter superfamily. ABCG family. PDR (TC 3.A.1.205) subfamily.

It is found in the cell membrane. Its function is as follows. ABC-type transporter; part of the gene cluster that mediates the biosynthesis of cordycepin (COR) and pentostatin (PTN), two adenosine analogs with related bioactivity profiles as both mimic adenosine and can inhibit some of the processes that are adenosine dependent. Mediates the pumping of pentostatin but not of cordycepin out of fungal cells. Decreasing intracellular pentostatin releases adenosine deaminase (ADA) inhibition, allowing ADA to deaminate cordycepin into non-toxic 3'-d. In Cordyceps militaris (strain CM01) (Caterpillar fungus), this protein is ABC-type transporter cns4.